Consider the following 139-residue polypeptide: Holo-[acyl-carrier-protein] synthase (139 aa).

Mg(2+) is bound by residues D8 and E61.

Belongs to the P-Pant transferase superfamily. AcpS family. It depends on Mg(2+) as a cofactor.

It localises to the cytoplasm. The enzyme catalyses apo-[ACP] + CoA = holo-[ACP] + adenosine 3',5'-bisphosphate + H(+). Its function is as follows. Transfers the 4'-phosphopantetheine moiety from coenzyme A to a Ser of acyl-carrier-protein. The polypeptide is Holo-[acyl-carrier-protein] synthase (Rhodopseudomonas palustris (strain BisA53)).